Reading from the N-terminus, the 279-residue chain is uncharacterized protein (279 aa).

Helical transmembrane passes span 1–21, 38–58, and 131–151; these read MGFIKSTLLATVTVFVGLCGI, FACHTFLAISSAYGVIASVVA, and SLRYVPILGWFMILSDVVFID.

This sequence belongs to the 1-acyl-sn-glycerol-3-phosphate acyltransferase family.

It localises to the endoplasmic reticulum membrane. This is an uncharacterized protein from Schizosaccharomyces pombe (strain 972 / ATCC 24843) (Fission yeast).